Here is a 299-residue protein sequence, read N- to C-terminus: Small ribosomal subunit biogenesis GTPase RsgA (299 aa).

Residues 64 to 225 form the CP-type G domain; the sequence is KNEMIRPPVA…VGDTPGFSSL (162 aa). Residues 113 to 116 and 168 to 176 each bind GTP; these read TKTD and GQTGAGKST. Zn(2+)-binding residues include cysteine 249, cysteine 254, histidine 256, and cysteine 262.

This sequence belongs to the TRAFAC class YlqF/YawG GTPase family. RsgA subfamily. Monomer. Associates with 30S ribosomal subunit, binds 16S rRNA. It depends on Zn(2+) as a cofactor.

It localises to the cytoplasm. In terms of biological role, one of several proteins that assist in the late maturation steps of the functional core of the 30S ribosomal subunit. Helps release RbfA from mature subunits. May play a role in the assembly of ribosomal proteins into the subunit. Circularly permuted GTPase that catalyzes slow GTP hydrolysis, GTPase activity is stimulated by the 30S ribosomal subunit. This chain is Small ribosomal subunit biogenesis GTPase RsgA, found in Latilactobacillus sakei subsp. sakei (strain 23K) (Lactobacillus sakei subsp. sakei).